The chain runs to 78 residues: Alpha-neurotoxin homolog 7 (78 aa).

The signal sequence occupies residues 1 to 21 (MKTLLLTLVVVTIVCLDFGYT). Cystine bridges form between C24-C42, C37-C57, C59-C70, and C71-C76.

Belongs to the three-finger toxin family. Short-chain subfamily. Orphan group XII sub-subfamily. In terms of tissue distribution, expressed by the venom gland.

The protein localises to the secreted. The sequence is that of Alpha-neurotoxin homolog 7 from Micrurus corallinus (Brazilian coral snake).